We begin with the raw amino-acid sequence, 389 residues long: Probable family 17 glucosidase SCW10 (389 aa).

An N-terminal signal peptide occupies residues 1–18 (MRFSNFLTVSALLTGALG). Positions 19–29 (APAVRHKHEKR) are excised as a propeptide. Residues 70–134 (ASQATTSTLE…SSASSSISAS (65 aa)) are disordered. Asparagine 279 is a glycosylation site (N-linked (GlcNAc...) asparagine). Catalysis depends on glutamate 326, which acts as the Nucleophile.

It belongs to the glycosyl hydrolase 17 family. Glycosylated.

The protein localises to the secreted. It localises to the cell wall. Glucanases possibly play a role in cell expansion during growth, in cell-cell fusion during mating, and in spore release during sporulation. The protein is Probable family 17 glucosidase SCW10 (SCW10) of Saccharomyces cerevisiae (strain ATCC 204508 / S288c) (Baker's yeast).